Reading from the N-terminus, the 335-residue chain is Dolichyl-diphosphooligosaccharide--protein glycosyltransferase subunit MAGT1 (335 aa).

Residues 1-29 (MASPRWFWSVCAIAAVALLLVSKVPSASA) form the signal peptide. Residues 30–184 (QRKKEMVLSE…DVNIRVIRPP (155 aa)) are Extracellular-facing. The 129-residue stretch at 47–175 (WANKRPVIRM…IARWIADRTD (129 aa)) folds into the Thioredoxin domain. Residue N71 is glycosylated (N-linked (GlcNAc...) asparagine). Residues C87 and C90 are joined by a disulfide bond. Residues 185-205 (NYAGPLMLGLLLAVIGGLVYL) traverse the membrane as a helical segment. Topologically, residues 206–209 (RRSN) are cytoplasmic. A helical membrane pass occupies residues 210 to 230 (MEFLFNKTGWAFAALCFVLAM). Residues 231 to 270 (TSGQMWNHIRGPPYAHKNPHTGHVNYIHGSSQAQFVAETH) lie on the Extracellular side of the membrane. A helical transmembrane segment spans residues 271-291 (IVLLFNGGVTLGMVLLCEAAT). Residues 292 to 300 (SDMDIGKRR) lie on the Cytoplasmic side of the membrane. The chain crosses the membrane as a helical span at residues 301-321 (MMCIAGIGLVVLFFSWMLSIF). At 322 to 335 (RSKYHGYPYSFLMS) the chain is on the extracellular side.

It belongs to the OST3/OST6 family. Accessory component of the STT3B-containing form of the oligosaccharyltransferase (OST) complex. OST exists in two different complex forms which contain common core subunits RPN1, RPN2, OST48, OST4, DAD1 and TMEM258, either STT3A or STT3B as catalytic subunits, and form-specific accessory subunits. OST can form stable complexes with the Sec61 complex or with both the Sec61 and TRAP complexes. The association of TUSC3 or MAGT1 with the STT3B-containing complex seems to be mutually exclusvice. Expressed at high levels in kidney, colon, heart and liver. Expressed at lower levels in intestine, spleen, brain and lung.

It localises to the cell membrane. The protein localises to the endoplasmic reticulum. The protein resides in the endoplasmic reticulum membrane. It functions in the pathway protein modification; protein glycosylation. Functionally, accessory component of the STT3B-containing form of the N-oligosaccharyl transferase (OST) complex which catalyzes the transfer of a high mannose oligosaccharide from a lipid-linked oligosaccharide donor to an asparagine residue within an Asn-X-Ser/Thr consensus motif in nascent polypeptide chains. Involved in N-glycosylation of STT3B-dependent substrates. Specifically required for the glycosylation of a subset of acceptor sites that are near cysteine residues; in this function seems to act redundantly with TUSC3. In its oxidized form proposed to form transient mixed disulfides with a glycoprotein substrate to facilitate access of STT3B to the unmodified acceptor site. Also has oxidoreductase-independent functions in the STT3B-containing OST complex possibly involving substrate recognition. Could indirectly play a role in Mg(2+) transport in epithelial cells. The polypeptide is Dolichyl-diphosphooligosaccharide--protein glycosyltransferase subunit MAGT1 (Mus musculus (Mouse)).